A 98-amino-acid chain; its full sequence is MNQTAILICCLIFLTLSGIQGVPLSRTVRCTCISISNQPVNPRSLEKLEIIPASQFCPRVEIIATMKKKGEKRCLNPESKAIKNLLKAVSKERSKRSP.

The N-terminal stretch at 1–21 (MNQTAILICCLIFLTLSGIQG) is a signal peptide. Arg-26 carries the post-translational modification Citrulline; by PAD2. 2 disulfides stabilise this stretch: Cys-30/Cys-57 and Cys-32/Cys-74.

Belongs to the intercrine alpha (chemokine CxC) family. As to quaternary structure, monomer, dimer, and tetramer. Interacts with CXCR3 (via N-terminus). Post-translationally, several proteases can mediate post-secretion cleavages. DPP4 cleaves CXCL10 on its N-terminal 2 amino acids leading to an antagonist form of CXCL10. This dominant negative form is capable of binding CXCR3 but does not induce signaling. MMP9 cleaves 9 amino acids instead. As to expression, mainly secreted by monocytes, endothelial cells as well as fibroblasts. Expressed by epithelial cells in thymus. Microglial cells produce CXCL10 in response to viral stimulation.

It is found in the secreted. In terms of biological role, pro-inflammatory cytokine that is involved in a wide variety of processes such as chemotaxis, differentiation, and activation of peripheral immune cells, regulation of cell growth, apoptosis and modulation of angiostatic effects. Plays thereby an important role during viral infections by stimulating the activation and migration of immune cells to the infected sites. Mechanistically, binding of CXCL10 to the CXCR3 receptor activates G protein-mediated signaling and results in downstream activation of phospholipase C-dependent pathway, an increase in intracellular calcium production and actin reorganization. In turn, recruitment of activated Th1 lymphocytes occurs at sites of inflammation. Activation of the CXCL10/CXCR3 axis also plays an important role in neurons in response to brain injury for activating microglia, the resident macrophage population of the central nervous system, and directing them to the lesion site. This recruitment is an essential element for neuronal reorganization. This Homo sapiens (Human) protein is C-X-C motif chemokine 10 (CXCL10).